The primary structure comprises 267 residues: Phosphatidylserine decarboxylase proenzyme (267 aa).

Catalysis depends on charge relay system; for autoendoproteolytic cleavage activity residues D78, H132, and S236. S236 functions as the Schiff-base intermediate with substrate; via pyruvic acid; for decarboxylase activity in the catalytic mechanism. A Pyruvic acid (Ser); by autocatalysis modification is found at S236.

The protein belongs to the phosphatidylserine decarboxylase family. PSD-B subfamily. Prokaryotic type I sub-subfamily. In terms of assembly, heterodimer of a large membrane-associated beta subunit and a small pyruvoyl-containing alpha subunit. Requires pyruvate as cofactor. Post-translationally, is synthesized initially as an inactive proenzyme. Formation of the active enzyme involves a self-maturation process in which the active site pyruvoyl group is generated from an internal serine residue via an autocatalytic post-translational modification. Two non-identical subunits are generated from the proenzyme in this reaction, and the pyruvate is formed at the N-terminus of the alpha chain, which is derived from the carboxyl end of the proenzyme. The autoendoproteolytic cleavage occurs by a canonical serine protease mechanism, in which the side chain hydroxyl group of the serine supplies its oxygen atom to form the C-terminus of the beta chain, while the remainder of the serine residue undergoes an oxidative deamination to produce ammonia and the pyruvoyl prosthetic group on the alpha chain. During this reaction, the Ser that is part of the protease active site of the proenzyme becomes the pyruvoyl prosthetic group, which constitutes an essential element of the active site of the mature decarboxylase.

Its subcellular location is the cell membrane. The catalysed reaction is a 1,2-diacyl-sn-glycero-3-phospho-L-serine + H(+) = a 1,2-diacyl-sn-glycero-3-phosphoethanolamine + CO2. It functions in the pathway phospholipid metabolism; phosphatidylethanolamine biosynthesis; phosphatidylethanolamine from CDP-diacylglycerol: step 2/2. Functionally, catalyzes the formation of phosphatidylethanolamine (PtdEtn) from phosphatidylserine (PtdSer). In Helicobacter pylori (strain Shi470), this protein is Phosphatidylserine decarboxylase proenzyme.